The primary structure comprises 443 residues: MSEMTPREIVSELDKHIIGQDNAKRSVAIALRNRWRRMQLNEELRHEVTPKNILMIGPTGVGKTEIARRLAKLANAPFIKVEATKFTEVGYVGKEVDSIIRDLTDAAVKMVRVQAIEKNRYRAEELAEERILDVLIPPAKNNWGQTEQQQEPSAARQAFRKKLREGQLDDKEIEIDLAAAPMGVEIMAPPGMEEMTSQLQSMFQNLGGQKQKARKLKIKDAMKLLIEEEAAKLVNPEELKQDAIDAVEQHGIVFIDEIDKICKRGESSGPDVSREGVQRDLLPLVEGCTVSTKHGMVKTDHILFIASGAFQIAKPSDLIPELQGRLPIRVELQALTTSDFERILTEPNASITVQYKALMATEGVNIEFTDSGIKRIAEAAWQVNESTENIGARRLHTVLERLMEEISYDASDLSGQTIIIDADYVSKHLDALVADEDLSRFIL.

ATP-binding positions include isoleucine 18, 60 to 65, aspartate 256, glutamate 321, and arginine 393; that span reads GVGKTE.

This sequence belongs to the ClpX chaperone family. HslU subfamily. In terms of assembly, a double ring-shaped homohexamer of HslV is capped on each side by a ring-shaped HslU homohexamer. The assembly of the HslU/HslV complex is dependent on binding of ATP.

It is found in the cytoplasm. ATPase subunit of a proteasome-like degradation complex; this subunit has chaperone activity. The binding of ATP and its subsequent hydrolysis by HslU are essential for unfolding of protein substrates subsequently hydrolyzed by HslV. HslU recognizes the N-terminal part of its protein substrates and unfolds these before they are guided to HslV for hydrolysis. This is ATP-dependent protease ATPase subunit HslU from Escherichia coli O139:H28 (strain E24377A / ETEC).